The chain runs to 63 residues: MQSGNFTLEVIMYLINSILAFIMIFFTFVNPSLLKCQYWTYILVALITAIIFHTGSKVGKSSG.

The Extracellular portion of the chain corresponds to 1–8; that stretch reads MQSGNFTL. A helical transmembrane segment spans residues 9–29; it reads EVIMYLINSILAFIMIFFTFV. At 30–31 the chain is on the cytoplasmic side; it reads NP. Residues 32 to 52 form a helical membrane-spanning segment; the sequence is SLLKCQYWTYILVALITAIIF. Residues 53–63 lie on the Extracellular side of the membrane; the sequence is HTGSKVGKSSG.

It localises to the host membrane. In Acidianus filamentous virus 1 (isolate United States/Yellowstone) (AFV-1), this protein is Putative transmembrane protein ORF63.